The sequence spans 143 residues: MKFLTVAAVFFTAVLAAPGNYPPPPPPTYAPPPPTYTLPPNGNGGGNGNGNGNGNGGGNGNGNGNTNTGGSALCPAGLYSNPQSCATDVLGLADLDCAVPSTTPHDGPNFQSICVANGGKRARCCVLPVLGLGVLCQNPVGTN.

An N-terminal signal peptide occupies residues 1-17; the sequence is MKFLTVAAVFFTAVLAA. Pro residues predominate over residues 20–37; it reads NYPPPPPPTYAPPPPTYT. Residues 20 to 67 form a disordered region; that stretch reads NYPPPPPPTYAPPPPTYTLPPNGNGGGNGNGNGNGNGGGNGNGNGNTN. Tandem repeats lie at residues 41–42, 43–44, 47–48, 49–50, 51–52, 53–54, 55–56, 59–60, 61–62, and 63–64. Residues 41-64 are 10 X 2 AA repeats of N-G; that stretch reads NGNGGGNGNGNGNGNGGGNGNGNG. A compositionally biased stretch (gly residues) spans 42–63; sequence GNGGGNGNGNGNGNGGGNGNGN. Disulfide bonds link Cys74/Cys124, Cys85/Cys97, and Cys125/Cys136.

Belongs to the cerato-ulmin hydrophobin family. Homotetramer. Further self-assembles to form highly ordered films at water-air interfaces through intermolecular interactions.

It localises to the secreted. It is found in the cell wall. In terms of biological role, aerial growth, conidiation, and dispersal of filamentous fungi in the environment rely upon a capability of their secreting small amphipathic proteins called hydrophobins (HPBs) with low sequence identity. Class I can self-assemble into an outermost layer of rodlet bundles on aerial cell surfaces, conferring cellular hydrophobicity that supports fungal growth, development and dispersal; whereas Class II form highly ordered films at water-air interfaces through intermolecular interactions but contribute nothing to the rodlet structure. Qid3 is a class II hydrophobin that might acts as a chitinase inhibitor at the cell surface that blocks the degradation of the chitin rings localized in the budding region of dividing cells. The polypeptide is Class II hydrophobin qid3 (Trichoderma harzianum (Hypocrea lixii)).